Here is a 390-residue protein sequence, read N- to C-terminus: DNA polymerase IV (390 aa).

Positions 6 to 187 (VMHVDLDAFF…LDISIMPGIG (182 aa)) constitute a UmuC domain. 2 residues coordinate Mg(2+): D10 and D105. Residue E106 is part of the active site.

The protein belongs to the DNA polymerase type-Y family. In terms of assembly, monomer. Mg(2+) serves as cofactor.

Its subcellular location is the cytoplasm. The catalysed reaction is DNA(n) + a 2'-deoxyribonucleoside 5'-triphosphate = DNA(n+1) + diphosphate. Poorly processive, error-prone DNA polymerase involved in untargeted mutagenesis. Copies undamaged DNA at stalled replication forks, which arise in vivo from mismatched or misaligned primer ends. These misaligned primers can be extended by PolIV. Exhibits no 3'-5' exonuclease (proofreading) activity. May be involved in translesional synthesis, in conjunction with the beta clamp from PolIII. The chain is DNA polymerase IV from Dehalococcoides mccartyi (strain ATCC BAA-2266 / KCTC 15142 / 195) (Dehalococcoides ethenogenes (strain 195)).